The sequence spans 674 residues: Probable protein phosphatase 2C 66 (674 aa).

Phosphoserine is present on Ser-125. 2 disordered regions span residues 153-175 and 202-247; these read YSGP…RKKP and KSVI…KQSM. The PPM-type phosphatase domain maps to 244-665; sequence KQSMNSVLDV…DDVSVIVISL (422 aa). Asp-282 and Gly-283 together coordinate Mn(2+). Residues 373–384 show a composition bias toward basic and acidic residues; that stretch reads NNKTKSDNRCDQ. The segment at 373-392 is disordered; sequence NNKTKSDNRCDQKGSNSTTT. Asp-593 and Asp-656 together coordinate Mn(2+).

It belongs to the PP2C family. Mg(2+) serves as cofactor. It depends on Mn(2+) as a cofactor. In terms of tissue distribution, expressed at low level in seedlings, roots, leaves, stems, young inflorescences, flowers and siliques.

It localises to the nucleus. The enzyme catalyses O-phospho-L-seryl-[protein] + H2O = L-seryl-[protein] + phosphate. It catalyses the reaction O-phospho-L-threonyl-[protein] + H2O = L-threonyl-[protein] + phosphate. The chain is Probable protein phosphatase 2C 66 (PLL2) from Arabidopsis thaliana (Mouse-ear cress).